We begin with the raw amino-acid sequence, 86 residues long: UPF0457 protein BCE33L2265 (86 aa).

The protein belongs to the UPF0457 family.

In Bacillus cereus (strain ZK / E33L), this protein is UPF0457 protein BCE33L2265.